Reading from the N-terminus, the 208-residue chain is Large ribosomal subunit protein uL4 (208 aa).

The tract at residues 45 to 77 (RQGTHKAKERAEIKGSTRKIKKQKGTGTARAGS) is disordered.

Belongs to the universal ribosomal protein uL4 family. Part of the 50S ribosomal subunit.

In terms of biological role, one of the primary rRNA binding proteins, this protein initially binds near the 5'-end of the 23S rRNA. It is important during the early stages of 50S assembly. It makes multiple contacts with different domains of the 23S rRNA in the assembled 50S subunit and ribosome. Functionally, forms part of the polypeptide exit tunnel. This chain is Large ribosomal subunit protein uL4, found in Christiangramia forsetii (strain DSM 17595 / CGMCC 1.15422 / KT0803) (Gramella forsetii).